We begin with the raw amino-acid sequence, 122 residues long: 5'-AMP-activated protein kinase subunit beta-1 (122 aa).

Phosphoserine occurs at positions 5, 61, 66, and 73. Residues 33–122 are glycogen-binding domain; the sequence is EVNDKASAQA…TVNNIIQVKK (90 aa). Thr-113 bears the Phosphothreonine mark.

It belongs to the 5'-AMP-activated protein kinase beta subunit family. AMPK is a heterotrimer of an alpha catalytic subunit (PRKAA1 or PRKAA2), a beta (PRKAB1 or PRKAB2) and a gamma non-catalytic subunits (PRKAG1, PRKAG2 or PRKAG3). Interacts with FNIP1 and FNIP2. Post-translationally, phosphorylated when associated with the catalytic subunit (PRKAA1 or PRKAA2). Phosphorylated by ULK1; leading to negatively regulate AMPK activity and suggesting the existence of a regulatory feedback loop between ULK1 and AMPK.

Its function is as follows. Non-catalytic subunit of AMP-activated protein kinase (AMPK), an energy sensor protein kinase that plays a key role in regulating cellular energy metabolism. In response to reduction of intracellular ATP levels, AMPK activates energy-producing pathways and inhibits energy-consuming processes: inhibits protein, carbohydrate and lipid biosynthesis, as well as cell growth and proliferation. AMPK acts via direct phosphorylation of metabolic enzymes, and by longer-term effects via phosphorylation of transcription regulators. Also acts as a regulator of cellular polarity by remodeling the actin cytoskeleton; probably by indirectly activating myosin. Beta non-catalytic subunit acts as a scaffold on which the AMPK complex assembles, via its C-terminus that bridges alpha (PRKAA1 or PRKAA2) and gamma subunits (PRKAG1, PRKAG2 or PRKAG3). This is 5'-AMP-activated protein kinase subunit beta-1 (PRKAB1) from Sus scrofa (Pig).